Consider the following 121-residue polypeptide: Large ribosomal subunit protein uL22 (121 aa).

This sequence belongs to the universal ribosomal protein uL22 family. Part of the 50S ribosomal subunit.

Its function is as follows. This protein binds specifically to 23S rRNA; its binding is stimulated by other ribosomal proteins, e.g. L4, L17, and L20. It is important during the early stages of 50S assembly. It makes multiple contacts with different domains of the 23S rRNA in the assembled 50S subunit and ribosome. Functionally, the globular domain of the protein is located near the polypeptide exit tunnel on the outside of the subunit, while an extended beta-hairpin is found that lines the wall of the exit tunnel in the center of the 70S ribosome. The sequence is that of Large ribosomal subunit protein uL22 from Arthrobacter sp. (strain FB24).